The primary structure comprises 442 residues: Histidine--tRNA ligase (442 aa).

It belongs to the class-II aminoacyl-tRNA synthetase family. In terms of assembly, homodimer.

The protein resides in the cytoplasm. The catalysed reaction is tRNA(His) + L-histidine + ATP = L-histidyl-tRNA(His) + AMP + diphosphate + H(+). The polypeptide is Histidine--tRNA ligase (Wolinella succinogenes (strain ATCC 29543 / DSM 1740 / CCUG 13145 / JCM 31913 / LMG 7466 / NCTC 11488 / FDC 602W) (Vibrio succinogenes)).